A 1098-amino-acid chain; its full sequence is Contactin-5 (1098 aa).

Positions Met-1–Ala-23 are cleaved as a signal peptide. Ig-like C2-type domains lie at Pro-98–Gln-189, Asn-195–Ser-281, Pro-299–Gln-384, Pro-389–Lys-473, Pro-479–Lys-568, and Pro-570–Ser-659. A disulfide bond links Cys-122 and Cys-172. Residues Asn-137 and Asn-195 are each glycosylated (N-linked (GlcNAc...) asparagine). 2 disulfides stabilise this stretch: Cys-216–Cys-268 and Cys-321–Cys-368. Asn-396, Asn-448, and Asn-539 each carry an N-linked (GlcNAc...) asparagine glycan. 3 disulfide bridges follow: Cys-410-Cys-457, Cys-502-Cys-550, and Cys-592-Cys-649. Fibronectin type-III domains lie at Pro-672–Ala-770, Ala-775–Gly-872, Ala-877–His-971, and Pro-976–Gly-1066. 3 N-linked (GlcNAc...) asparagine glycosylation sites follow: Asn-778, Asn-815, and Asn-930. Residues Gly-956–Trp-982 form a disordered region. Residue Asn-1001 is glycosylated (N-linked (GlcNAc...) asparagine). Ser-1071 carries GPI-anchor amidated serine lipidation. The propeptide at Ala-1072–Trp-1098 is removed in mature form.

It belongs to the immunoglobulin superfamily. Contactin family. In terms of assembly, interacts with PTPRG. In terms of tissue distribution, expressed in the nervous system. Preferentially expressed in the central auditory pathways.

It is found in the cell membrane. Contactins mediate cell surface interactions during nervous system development. Has some neurite outgrowth-promoting activity in the cerebral cortical neurons but not in hippocampal neurons. Involved in neuronal activity in the auditory system. The polypeptide is Contactin-5 (Cntn5) (Mus musculus (Mouse)).